Here is a 101-residue protein sequence, read N- to C-terminus: Small ribosomal subunit protein uS14 (101 aa).

Belongs to the universal ribosomal protein uS14 family. Part of the 30S ribosomal subunit. Contacts proteins S3 and S10.

In terms of biological role, binds 16S rRNA, required for the assembly of 30S particles and may also be responsible for determining the conformation of the 16S rRNA at the A site. This chain is Small ribosomal subunit protein uS14, found in Vibrio campbellii (strain ATCC BAA-1116).